A 70-amino-acid chain; its full sequence is Alpha-toxin Bot9 (70 aa).

The 64-residue stretch at 6-69 (RDGYIVYPNN…PIKDPSYKCY (64 aa)) folds into the LCN-type CS-alpha/beta domain. 4 disulfide bridges follow: Cys-16-Cys-68, Cys-20-Cys-40, Cys-26-Cys-50, and Cys-30-Cys-52.

It belongs to the long (4 C-C) scorpion toxin superfamily. Sodium channel inhibitor family. Alpha subfamily. In terms of tissue distribution, expressed by the venom gland.

The protein resides in the secreted. In terms of biological role, alpha toxins bind voltage-independently at site-3 of sodium channels (Nav) and inhibit the inactivation of the activated channels, thereby blocking neuronal transmission. This toxin is active against rat Nav1.2/SCN2A and B.germanica Nav1. This is Alpha-toxin Bot9 from Buthus occitanus tunetanus (Common European scorpion).